Consider the following 225-residue polypeptide: tRNA (guanine-N(1)-)-methyltransferase (225 aa).

S-adenosyl-L-methionine is bound by residues Gly110 and 130 to 135; that span reads VGDYVL.

This sequence belongs to the RNA methyltransferase TrmD family. Homodimer.

It localises to the cytoplasm. It carries out the reaction guanosine(37) in tRNA + S-adenosyl-L-methionine = N(1)-methylguanosine(37) in tRNA + S-adenosyl-L-homocysteine + H(+). In terms of biological role, specifically methylates guanosine-37 in various tRNAs. The chain is tRNA (guanine-N(1)-)-methyltransferase from Neorickettsia sennetsu (strain ATCC VR-367 / Miyayama) (Ehrlichia sennetsu).